A 307-amino-acid chain; its full sequence is Coproporphyrin III ferrochelatase (307 aa).

Fe-coproporphyrin III is bound by residues Tyr-12, Arg-29, 45-46 (RY), Ser-53, and Tyr-124. Fe(2+) is bound by residues His-181 and Glu-263.

The protein belongs to the ferrochelatase family.

The protein localises to the cytoplasm. The catalysed reaction is Fe-coproporphyrin III + 2 H(+) = coproporphyrin III + Fe(2+). It functions in the pathway porphyrin-containing compound metabolism; protoheme biosynthesis. Functionally, involved in coproporphyrin-dependent heme b biosynthesis. Catalyzes the insertion of ferrous iron into coproporphyrin III to form Fe-coproporphyrin III. It can also insert iron into protoporphyrin IX, but it has a much stronger preference for coproprophyrin III as the substrate. In Staphylococcus aureus (strain NCTC 8325 / PS 47), this protein is Coproporphyrin III ferrochelatase.